Here is a 96-residue protein sequence, read N- to C-terminus: MEYANILLKPVISEKATMVKDAANQVVFFVHPAANKIEIAKAVEKAFSVTVKGVRVVKHKSLARSRMGRVTGRIPGYKKAYVTLAQGDKIEFFEGV.

Belongs to the universal ribosomal protein uL23 family. Part of the 50S ribosomal subunit. Contacts protein L29, and trigger factor when it is bound to the ribosome.

In terms of biological role, one of the early assembly proteins it binds 23S rRNA. One of the proteins that surrounds the polypeptide exit tunnel on the outside of the ribosome. Forms the main docking site for trigger factor binding to the ribosome. The polypeptide is Large ribosomal subunit protein uL23 (Solidesulfovibrio magneticus (strain ATCC 700980 / DSM 13731 / RS-1) (Desulfovibrio magneticus)).